The sequence spans 87 residues: Xibalbin-2 (87 aa).

The N-terminal stretch at 1–25 is a signal peptide; it reads MKGVCTRKVLYFFMAVILFVAIVAS. Residues 26-45 constitute a propeptide that is removed on maturation; sequence EDTENRNPAMAMPLQRMEQE.

This sequence belongs to the xibalbin-2 family. Contains 5 disulfide bonds. Expressed by the venom gland. Not found in the whole body.

It localises to the secreted. Probable neurotoxin. Moderately inhibits voltage-gated potassium channels (Kv1.1/KCNA1, Kv1.2/KCNA2, Kv1.3/KCNA3, and Kv1.6/KCNA6, with the highest toxicity against Kv1.6 (73.2% inhibition at 1 uM)) and weakly inhibits sodium channels (Nav1.4/SCN4A). Does not activate protein kinase A type II (PKA-II) and MAP kinase Erk1/2 in sensory neurons. Does not show cytotoxic activity. Does not have an impact on Ca2+, cAMP, and NO signaling in the cell types analyzed. Does not interfere with the adhesion of leukocytes to endothelial cells. Functionally, moderately inhibits voltage-gated potassium channels (Kv1.1/KCNA1, Kv1.2/KCNA2, Kv1.3/KCNA3, and Kv1.6/KCNA6, with the highest toxicity against Kv1.6 (75.9% inhibition at 1 uM)). Does not activate protein kinase A type II (PKA-II) and MAP kinase Erk1/2 in sensory neurons. Does not show cytotoxic activity. Does not have an impact on Ca2+, cAMP, and NO signaling in the cell types analyzed. Does not interfere with the adhesion of leukocytes to endothelial cells. The polypeptide is Xibalbin-2 (Xibalbanus tulumensis (Blind cave remipede)).